We begin with the raw amino-acid sequence, 504 residues long: Lysine--tRNA ligase (504 aa).

Residues glutamate 411 and glutamate 418 each contribute to the Mg(2+) site.

Belongs to the class-II aminoacyl-tRNA synthetase family. Homodimer. The cofactor is Mg(2+).

The protein localises to the cytoplasm. The enzyme catalyses tRNA(Lys) + L-lysine + ATP = L-lysyl-tRNA(Lys) + AMP + diphosphate. This chain is Lysine--tRNA ligase, found in Clostridium botulinum (strain Okra / Type B1).